Consider the following 137-residue polypeptide: MLQQPTIRHPIAVSLGAIAGALSRYYLSLWFAQRFGITFPYGTLFINITGCLAMGFFYALALERVSLISPEIRLLIAVGFLGAYTTFSTYALDTFTLLGDRNLVAAGFYWAGSTILGVISIQIGIILGRLCGKGLGV.

A run of 4 helical transmembrane segments spans residues 11–31, 42–62, 75–95, and 107–127; these read IAVS…SLWF, GTLF…ALAL, LIAV…LDTF, and GFYW…GIIL. Residues Gly-82 and Thr-85 each contribute to the Na(+) site.

The protein belongs to the fluoride channel Fluc/FEX (TC 1.A.43) family.

It localises to the cell inner membrane. The enzyme catalyses fluoride(in) = fluoride(out). With respect to regulation, na(+) is not transported, but it plays an essential structural role and its presence is essential for fluoride channel function. Its function is as follows. Fluoride-specific ion channel. Important for reducing fluoride concentration in the cell, thus reducing its toxicity. This is Fluoride-specific ion channel FluC from Trichormus variabilis (strain ATCC 29413 / PCC 7937) (Anabaena variabilis).